A 357-amino-acid chain; its full sequence is Alanine racemase (357 aa).

Lys-35 serves as the catalytic Proton acceptor; specific for D-alanine. Lys-35 is modified (N6-(pyridoxal phosphate)lysine). Arg-130 is a substrate binding site. Tyr-253 acts as the Proton acceptor; specific for L-alanine in catalysis. Residue Met-302 coordinates substrate.

The protein belongs to the alanine racemase family. Pyridoxal 5'-phosphate serves as cofactor.

It catalyses the reaction L-alanine = D-alanine. Its pathway is amino-acid biosynthesis; D-alanine biosynthesis; D-alanine from L-alanine: step 1/1. In terms of biological role, catalyzes the interconversion of L-alanine and D-alanine. May also act on other amino acids. In Wigglesworthia glossinidia brevipalpis, this protein is Alanine racemase (alr).